The chain runs to 475 residues: Aspartyl/glutamyl-tRNA(Asn/Gln) amidotransferase subunit B (475 aa).

This sequence belongs to the GatB/GatE family. GatB subfamily. As to quaternary structure, heterotrimer of A, B and C subunits.

The catalysed reaction is L-glutamyl-tRNA(Gln) + L-glutamine + ATP + H2O = L-glutaminyl-tRNA(Gln) + L-glutamate + ADP + phosphate + H(+). The enzyme catalyses L-aspartyl-tRNA(Asn) + L-glutamine + ATP + H2O = L-asparaginyl-tRNA(Asn) + L-glutamate + ADP + phosphate + 2 H(+). Allows the formation of correctly charged Asn-tRNA(Asn) or Gln-tRNA(Gln) through the transamidation of misacylated Asp-tRNA(Asn) or Glu-tRNA(Gln) in organisms which lack either or both of asparaginyl-tRNA or glutaminyl-tRNA synthetases. The reaction takes place in the presence of glutamine and ATP through an activated phospho-Asp-tRNA(Asn) or phospho-Glu-tRNA(Gln). The chain is Aspartyl/glutamyl-tRNA(Asn/Gln) amidotransferase subunit B from Staphylococcus saprophyticus subsp. saprophyticus (strain ATCC 15305 / DSM 20229 / NCIMB 8711 / NCTC 7292 / S-41).